A 267-amino-acid chain; its full sequence is Triosephosphate isomerase (267 aa).

Residue 12–14 (NWK) coordinates substrate. Histidine 104 acts as the Electrophile in catalysis. Residue glutamate 176 is the Proton acceptor of the active site. Substrate contacts are provided by residues glycine 182, serine 222, and 243 to 244 (GG).

It belongs to the triosephosphate isomerase family. Homodimer.

It is found in the cytoplasm. The catalysed reaction is D-glyceraldehyde 3-phosphate = dihydroxyacetone phosphate. Its pathway is carbohydrate biosynthesis; gluconeogenesis. The protein operates within carbohydrate degradation; glycolysis; D-glyceraldehyde 3-phosphate from glycerone phosphate: step 1/1. Functionally, involved in the gluconeogenesis. Catalyzes stereospecifically the conversion of dihydroxyacetone phosphate (DHAP) to D-glyceraldehyde-3-phosphate (G3P). The polypeptide is Triosephosphate isomerase (Bifidobacterium longum (strain DJO10A)).